Here is a 455-residue protein sequence, read N- to C-terminus: Growth/differentiation factor 9 (455 aa).

The first 24 residues, 1–24 (MALPNKFLLWFYCFAWLCFPVSLG), serve as a signal peptide directing secretion. A propeptide spanning residues 25-320 (SQASGGDAQI…GRSSHHRHRR (296 aa)) is cleaved from the precursor. Residues N106, N163, N236, N255, and N269 are each glycosylated (N-linked (GlcNAc...) asparagine). The disordered stretch occupies residues 305 to 328 (EDAAEDGRSSHHRHRRGQETVSSE). N339 carries an N-linked (GlcNAc...) asparagine glycan. Intrachain disulfides connect C354–C420, C383–C452, and C387–C454.

Belongs to the TGF-beta family. Homodimer or heterodimer (Potential). But, in contrast to other members of this family, cannot be disulfide-linked. Post-translationally, phosphorylated; phosphorylation is critical for GDF9 function.

The protein localises to the secreted. Its function is as follows. Required for ovarian folliculogenesis. This Papio anubis (Olive baboon) protein is Growth/differentiation factor 9 (GDF9).